The sequence spans 228 residues: NAD(P)H-hydrate epimerase (228 aa).

Residues 9-214 (AQNIDQELFN…DLLLKKYELE (206 aa)) form the YjeF N-terminal domain. 60-64 (NNGGD) is a (6S)-NADPHX binding site. K(+)-binding residues include asparagine 61 and aspartate 125. Residues 129–135 (GFSFKGE) and aspartate 158 each bind (6S)-NADPHX. A K(+)-binding site is contributed by serine 161.

The protein belongs to the NnrE/AIBP family. Requires K(+) as cofactor.

The enzyme catalyses (6R)-NADHX = (6S)-NADHX. The catalysed reaction is (6R)-NADPHX = (6S)-NADPHX. Functionally, catalyzes the epimerization of the S- and R-forms of NAD(P)HX, a damaged form of NAD(P)H that is a result of enzymatic or heat-dependent hydration. This is a prerequisite for the S-specific NAD(P)H-hydrate dehydratase to allow the repair of both epimers of NAD(P)HX. This chain is NAD(P)H-hydrate epimerase, found in Nematostella vectensis (Starlet sea anemone).